Here is a 547-residue protein sequence, read N- to C-terminus: Pyochelin synthase PchD (547 aa).

The protein belongs to the ATP-dependent AMP-binding enzyme family.

It catalyses the reaction salicylate + holo-[ACP] + ATP = salicyl-[ACP] + AMP + diphosphate. It participates in siderophore biosynthesis. Its pathway is antifungal biosynthesis. Its function is as follows. Involved in the biosynthesis of the siderophore pyochelin. Specifically adenylates salicylate and loads it onto the holo form of PchE via a thioester linkage to the phosphopanthetheine moiety. Is also involved in the synthesis of the antifungal antibiotic dihydroaeruginoic acid (Dha or hydroxyphenyl-thiazolinyl-carboxylate), a precursor of pyochelin. The protein is Pyochelin synthase PchD of Pseudomonas aeruginosa (strain UCBPP-PA14).